Here is a 261-residue protein sequence, read N- to C-terminus: Undecaprenyl-diphosphatase (261 aa).

The next 7 membrane-spanning stretches (helical) occupy residues arginine 38–phenylalanine 58, arginine 75–valine 95, isoleucine 106–valine 126, valine 136–glycine 156, phenylalanine 181–leucine 201, valine 217–isoleucine 237, and serine 241–threonine 261.

The protein belongs to the UppP family.

Its subcellular location is the cell inner membrane. The catalysed reaction is di-trans,octa-cis-undecaprenyl diphosphate + H2O = di-trans,octa-cis-undecaprenyl phosphate + phosphate + H(+). In terms of biological role, catalyzes the dephosphorylation of undecaprenyl diphosphate (UPP). Confers resistance to bacitracin. This Xylella fastidiosa (strain 9a5c) protein is Undecaprenyl-diphosphatase.